The following is a 206-amino-acid chain: uncharacterized protein (206 aa).

A helical membrane pass occupies residues 166–186 (FYTGLSVIVGGATALALGLFF).

The protein localises to the membrane. This is an uncharacterized protein from Dictyostelium discoideum (Social amoeba).